We begin with the raw amino-acid sequence, 222 residues long: Ribosome maturation factor RimM (222 aa).

Positions Met-1 to Glu-22 are disordered. Positions Glu-145 to Tyr-222 constitute a PRC barrel domain.

Belongs to the RimM family. Binds ribosomal protein uS19.

The protein localises to the cytoplasm. Functionally, an accessory protein needed during the final step in the assembly of 30S ribosomal subunit, possibly for assembly of the head region. Essential for efficient processing of 16S rRNA. May be needed both before and after RbfA during the maturation of 16S rRNA. It has affinity for free ribosomal 30S subunits but not for 70S ribosomes. The polypeptide is Ribosome maturation factor RimM (Cupriavidus necator (strain ATCC 17699 / DSM 428 / KCTC 22496 / NCIMB 10442 / H16 / Stanier 337) (Ralstonia eutropha)).